The following is a 365-amino-acid chain: UDP-N-acetylglucosamine--N-acetylmuramyl-(pentapeptide) pyrophosphoryl-undecaprenol N-acetylglucosamine transferase (365 aa).

Residues 19-21 (TGG), N131, R170, S201, I255, 274-279 (ALTVTE), and Q300 contribute to the UDP-N-acetyl-alpha-D-glucosamine site.

The protein belongs to the glycosyltransferase 28 family. MurG subfamily.

Its subcellular location is the cell inner membrane. It catalyses the reaction di-trans,octa-cis-undecaprenyl diphospho-N-acetyl-alpha-D-muramoyl-L-alanyl-D-glutamyl-meso-2,6-diaminopimeloyl-D-alanyl-D-alanine + UDP-N-acetyl-alpha-D-glucosamine = di-trans,octa-cis-undecaprenyl diphospho-[N-acetyl-alpha-D-glucosaminyl-(1-&gt;4)]-N-acetyl-alpha-D-muramoyl-L-alanyl-D-glutamyl-meso-2,6-diaminopimeloyl-D-alanyl-D-alanine + UDP + H(+). It functions in the pathway cell wall biogenesis; peptidoglycan biosynthesis. Its function is as follows. Cell wall formation. Catalyzes the transfer of a GlcNAc subunit on undecaprenyl-pyrophosphoryl-MurNAc-pentapeptide (lipid intermediate I) to form undecaprenyl-pyrophosphoryl-MurNAc-(pentapeptide)GlcNAc (lipid intermediate II). The chain is UDP-N-acetylglucosamine--N-acetylmuramyl-(pentapeptide) pyrophosphoryl-undecaprenol N-acetylglucosamine transferase from Acinetobacter baumannii (strain ACICU).